Here is a 270-residue protein sequence, read N- to C-terminus: Capsid maturation protease (270 aa).

Catalysis depends on residues His-89, Ser-168, and Asp-191.

In terms of processing, the self-cleavage of the C-terminus allows the activation of the protease.

The protein resides in the virion. In terms of biological role, serine protease that is responsible for cleaving many of the prohead proteins during a major morphogenetic step in viral capsid maturation. Cleaves the major capsid protein at 7 [A,G,S]-X-E recognition sites. This chain is Capsid maturation protease, found in Pseudomonas aeruginosa.